Reading from the N-terminus, the 394-residue chain is DNA primase large subunit PriL (394 aa).

[4Fe-4S] cluster contacts are provided by Cys-231, Cys-340, Cys-351, and Cys-357.

It belongs to the eukaryotic-type primase large subunit family. As to quaternary structure, heterodimer of a small subunit (PriS) and a large subunit (PriL). [4Fe-4S] cluster is required as a cofactor.

Functionally, regulatory subunit of DNA primase, an RNA polymerase that catalyzes the synthesis of short RNA molecules used as primers for DNA polymerase during DNA replication. Stabilizes and modulates the activity of the small subunit, increasing the rate of DNA synthesis, and conferring RNA synthesis capability. The DNA polymerase activity may enable DNA primase to also catalyze primer extension after primer synthesis. May also play a role in DNA repair. This chain is DNA primase large subunit PriL, found in Pyrococcus horikoshii (strain ATCC 700860 / DSM 12428 / JCM 9974 / NBRC 100139 / OT-3).